The chain runs to 1630 residues: Histone transcription regulator 3 homolog (1630 aa).

Residues 8–42 (NAASEDLDKEKRTLEIRIEEAVQIYQNALSAQKQG) form a TPR 1 repeat. Residues 325 to 347 (KDIVPPPSDNLPKPQLLKRPIDD) are disordered. The stretch at 1230–1263 (WRALYMLGKACRKCGDMENALVHFEAAAALAPTK) is one TPR 2 repeat.

This sequence belongs to the HIR3 family. Interacts with hip1 and slm9.

It is found in the nucleus. In terms of biological role, has a role in a nucleosome assembly pathway that is required for the integrity of heterochromatin and proper chromosome segregation. Required for transcriptional silencing in the outer repeat (otr) region of centromeric repeats and the Tf2 long terminal repeat retrotransposons. This Schizosaccharomyces pombe (strain 972 / ATCC 24843) (Fission yeast) protein is Histone transcription regulator 3 homolog (hip3).